Consider the following 536-residue polypeptide: Multicopper oxidase CueO (536 aa).

Residues M1 to A28 constitute a signal peptide (tat-type signal). 3 consecutive Plastocyanin-like domains span residues K53–D165, G229–L295, and F424–V536. The Cu cation site is built by H101, H103, H141, and H143. Cu cation is bound by residues H463, H466, H468, H519, C520, H521, and H525.

It belongs to the multicopper oxidase family. In terms of assembly, monomer. Cu cation serves as cofactor. Predicted to be exported by the Tat system. The position of the signal peptide cleavage has not been experimentally proven.

It localises to the periplasm. The catalysed reaction is 4 Cu(+) + O2 + 4 H(+) = 4 Cu(2+) + 2 H2O. Multicopper oxidase involved in copper homeostasis and copper tolerance under both aerobic and anaerobic conditions. Is responsible for the oxidation of Cu(+) to the less harmful Cu(2+) in the periplasm, thereby preventing Cu(+) from entering the cytoplasm. In Salmonella typhimurium (strain LT2 / SGSC1412 / ATCC 700720), this protein is Multicopper oxidase CueO (cueO).